The sequence spans 72 residues: UPF0270 protein YheU (72 aa).

The protein belongs to the UPF0270 family.

The sequence is that of UPF0270 protein YheU from Salmonella agona (strain SL483).